A 459-amino-acid polypeptide reads, in one-letter code: NADH oxidase (459 aa).

Asn-10 contributes to the FAD binding site. His-11 acts as the Proton acceptor in catalysis. Residues Ala-12, Asp-34, Gln-35, Cys-44, Val-81, Ala-110, Ser-113, Lys-143, and Tyr-172 each coordinate FAD. Residue Cys-44 is the Redox-active of the active site. Cysteine sulfinic acid (-SO2H) is present on Cys-44. 4 residues coordinate NAD(+): Ile-173, Asp-192, Tyr-201, and Gly-256. Residue Asp-294 participates in FAD binding. Ala-310 lines the NAD(+) pocket. Residues Leu-311, Ala-312, and Ser-313 each contribute to the FAD site. Gly-341 is a binding site for NAD(+). An FAD-binding site is contributed by Phe-439.

The protein belongs to the class-III pyridine nucleotide-disulfide oxidoreductase family. FAD serves as cofactor.

It localises to the secreted. It is found in the cell wall. It catalyses the reaction 2 NADH + O2 + 2 H(+) = 2 NAD(+) + 2 H2O. Catalyzes the four-electron reduction of molecular oxygen to water. Plays a role in redox balance maintenance. May be involved in mediating bacterial adhesion to host cells. May be considered a potential virulence factor. This Streptococcus pneumoniae serotype 4 (strain ATCC BAA-334 / TIGR4) protein is NADH oxidase.